The chain runs to 278 residues: Tumor necrosis factor ligand superfamily member 6 (278 aa).

Residues 1–77 (MQQPVNYPCP…SPLKKKDNIE (77 aa)) are Cytoplasmic-facing. Positions 26-68 (PGSVFSCPSSGPRGPGQRRPPPPPPPPSPLPPPSQPPPLPPLS) are disordered. The span at 33-42 (PSSGPRGPGQ) shows a compositional bias: low complexity. Residues 43–68 (RRPPPPPPPPSPLPPPSQPPPLPPLS) show a composition bias toward pro residues. The chain crosses the membrane as a helical; Signal-anchor for type II membrane protein span at residues 78-99 (LWLPVIFFMVLVALVGMGLGMY). Over 100-278 (QLFHLQKELA…SKTFFGLYKL (179 aa)) the chain is Extracellular. A glycan (N-linked (GlcNAc...) asparagine) is linked at asparagine 116. Polar residues predominate over residues 125 to 135 (EKQIANPSTPS). The tract at residues 125–147 (EKQIANPSTPSETKKPRSVAHLT) is disordered. Residues 142 to 278 (SVAHLTGNPR…SKTFFGLYKL (137 aa)) enclose the THD domain. Cysteine 199 and cysteine 230 form a disulfide bridge. N-linked (GlcNAc...) asparagine glycosylation is found at asparagine 247 and asparagine 257.

The protein belongs to the tumor necrosis factor family. In terms of assembly, homotrimer. Interacts with ARHGAP9, BAIAP2L1, BTK, CACNB3, CACNB4, CRK, DLG2, DNMBP, DOCK4, EPS8L3, FGR, FYB1, FYN, HCK, ITK, ITSN2, KALRN, LYN, MACC1, MIA, MPP4, MYO15A, NCF1, NCK1, NCK2, NCKIPSD, OSTF1, PIK3R1, PSTPIP1, RIMBP3C, SAMSN1, SH3GL3, SH3PXD2B, SH3PXD2A, SH3RF2, SKAP2, SNX33, SNX9, SORBS3, SPTA1, SRC, SRGAP1, SRGAP2, SRGAP3, TEC, TJP3 and YES1. In terms of processing, the soluble form derives from the membrane form by proteolytic processing. The membrane-bound form undergoes two successive intramembrane proteolytic cleavages. The first one is processed by ADAM10 producing an N-terminal fragment, which lacks the receptor-binding extracellular domain. This ADAM10-processed FasL (FasL APL) remnant form is still membrane anchored and further processed by SPPL2A that liberates the FasL intracellular domain (FasL ICD). FasL shedding by ADAM10 is a prerequisite for subsequent intramembrane cleavage by SPPL2A in T-cells. Post-translationally, phosphorylated by FGR on tyrosine residues; this is required for ubiquitination and subsequent internalization. N-glycosylated. In terms of processing, monoubiquitinated. As to expression, expressed in activated splenocytes and thymocytes. Moderate or weak expression found in small intestines, kidney and lung.

The protein localises to the cell membrane. The protein resides in the cytoplasmic vesicle lumen. It localises to the lysosome lumen. It is found in the secreted. Its subcellular location is the nucleus. In terms of biological role, cytokine that binds to TNFRSF6/FAS, a receptor that transduces the apoptotic signal into cells. Involved in cytotoxic T-cell-mediated apoptosis, natural killer cell-mediated apoptosis and in T-cell development. Initiates fratricidal/suicidal activation-induced cell death (AICD) in antigen-activated T-cells contributing to the termination of immune responses. TNFRSF6/FAS-mediated apoptosis also has a role in the induction of peripheral tolerance. Binds to TNFRSF6B/DcR3, a decoy receptor that blocks apoptosis. Functionally, induces FAS-mediated activation of NF-kappa-B, initiating non-apoptotic signaling pathways. Can induce apoptosis but does not appear to be essential for this process. Cytoplasmic form induces gene transcription inhibition. The polypeptide is Tumor necrosis factor ligand superfamily member 6 (Faslg) (Rattus norvegicus (Rat)).